Consider the following 505-residue polypeptide: Probable alpha-L-arabinofuranosidase C (505 aa).

4 N-linked (GlcNAc...) asparagine glycosylation sites follow: asparagine 81, asparagine 152, asparagine 269, and asparagine 438.

Belongs to the glycosyl hydrolase 51 family.

The protein resides in the secreted. The catalysed reaction is Hydrolysis of terminal non-reducing alpha-L-arabinofuranoside residues in alpha-L-arabinosides.. The protein operates within glycan metabolism; L-arabinan degradation. Its function is as follows. Alpha-L-arabinofuranosidase involved in the degradation of arabinoxylan, a major component of plant hemicellulose. Acts only on small linear 1,5-alpha-linked L-arabinofuranosyl oligosaccharides. The protein is Probable alpha-L-arabinofuranosidase C (abfC) of Aspergillus fumigatus (strain ATCC MYA-4609 / CBS 101355 / FGSC A1100 / Af293) (Neosartorya fumigata).